Reading from the N-terminus, the 152-residue chain is Mitochondrial fission 1 protein (152 aa).

Met-1 bears the N-acetylmethionine mark. At 1–122 (MEAVLNELVS…LIDKAMKKDG (122 aa)) the chain is on the cytoplasmic side. Ser-10 carries the phosphoserine modification. One copy of the TPR repeat lies at 71–104 (RDYVFYLAVGNYRLKEYEKALKYVRGLLQTEPQN). A helical transmembrane segment spans residues 123–143 (LVGMAIVGGMALGVAGLAGLI). Residues 144 to 152 (GLAVSKSKS) lie on the Mitochondrial intermembrane side of the membrane.

It belongs to the FIS1 family. As to quaternary structure, interacts with DNM1L/DLP1 through the TPR region; may form part of a larger protein complex at the endoplasmic reticulum-mitochondrial interface during mitochondrial fission. Interacts with MARCHF5. Interacts with MIEF1. Interacts with PEX11A, PEX11B and PEX11G. Post-translationally, ubiquitinated by MARCHF5.

The protein resides in the mitochondrion outer membrane. Its subcellular location is the peroxisome membrane. Its function is as follows. Involved in the fragmentation of the mitochondrial network and its perinuclear clustering. Plays a minor role in the recruitment and association of the fission mediator dynamin-related protein 1 (DNM1L) to the mitochondrial surface and mitochondrial fission. May not be essential for the assembly of functional fission complexes and the subsequent membrane scission event. Also mediates peroxisomal fission. May act when the products of fission are directed toward mitochondrial homeostasis, mitophagy, or apoptosis. Can induce cytochrome c release from the mitochondrion to the cytosol, ultimately leading to apoptosis. This Rattus norvegicus (Rat) protein is Mitochondrial fission 1 protein.